A 102-amino-acid chain; its full sequence is NADH-quinone oxidoreductase subunit K (102 aa).

The next 3 membrane-spanning stretches (helical) occupy residues 6–26 (MEHG…GLMV), 30–50 (ILFI…AFVV), and 62–82 (VMFI…LAIL).

This sequence belongs to the complex I subunit 4L family. As to quaternary structure, NDH-1 is composed of 13 different subunits. Subunits NuoA, H, J, K, L, M, N constitute the membrane sector of the complex.

It is found in the cell inner membrane. The catalysed reaction is a quinone + NADH + 5 H(+)(in) = a quinol + NAD(+) + 4 H(+)(out). Its function is as follows. NDH-1 shuttles electrons from NADH, via FMN and iron-sulfur (Fe-S) centers, to quinones in the respiratory chain. The immediate electron acceptor for the enzyme in this species is believed to be ubiquinone. Couples the redox reaction to proton translocation (for every two electrons transferred, four hydrogen ions are translocated across the cytoplasmic membrane), and thus conserves the redox energy in a proton gradient. The chain is NADH-quinone oxidoreductase subunit K from Ectopseudomonas mendocina (strain ymp) (Pseudomonas mendocina).